Consider the following 108-residue polypeptide: Pyrimidine/purine nucleoside phosphorylase (108 aa).

Belongs to the nucleoside phosphorylase PpnP family.

The catalysed reaction is a purine D-ribonucleoside + phosphate = a purine nucleobase + alpha-D-ribose 1-phosphate. It catalyses the reaction adenosine + phosphate = alpha-D-ribose 1-phosphate + adenine. The enzyme catalyses cytidine + phosphate = cytosine + alpha-D-ribose 1-phosphate. It carries out the reaction guanosine + phosphate = alpha-D-ribose 1-phosphate + guanine. The catalysed reaction is inosine + phosphate = alpha-D-ribose 1-phosphate + hypoxanthine. It catalyses the reaction thymidine + phosphate = 2-deoxy-alpha-D-ribose 1-phosphate + thymine. The enzyme catalyses uridine + phosphate = alpha-D-ribose 1-phosphate + uracil. It carries out the reaction xanthosine + phosphate = alpha-D-ribose 1-phosphate + xanthine. Catalyzes the phosphorolysis of diverse nucleosides, yielding D-ribose 1-phosphate and the respective free bases. Can use uridine, adenosine, guanosine, cytidine, thymidine, inosine and xanthosine as substrates. Also catalyzes the reverse reactions. The sequence is that of Pyrimidine/purine nucleoside phosphorylase from Polaromonas naphthalenivorans (strain CJ2).